Here is a 219-residue protein sequence, read N- to C-terminus: Guanylate kinase (219 aa).

Residues 15-194 (GLMFVLSSPS…AFAEVQSILK (180 aa)) form the Guanylate kinase-like domain. 22 to 29 (SPSGAGKT) is an ATP binding site.

This sequence belongs to the guanylate kinase family.

It is found in the cytoplasm. It catalyses the reaction GMP + ATP = GDP + ADP. Its function is as follows. Essential for recycling GMP and indirectly, cGMP. The polypeptide is Guanylate kinase (Nitrobacter winogradskyi (strain ATCC 25391 / DSM 10237 / CIP 104748 / NCIMB 11846 / Nb-255)).